Reading from the N-terminus, the 288-residue chain is MRGGAGAAEAPAAAGAATAAEAEAPPAAVEAWALRVAGWAPHDATRARLEAGLQQEERERVRKFRFEIDRHRALAGRVLIRTMVAEALRVDPAEIELKRTEMGKPFVARPDPGTFSFNLSHHGDWVVLMGHPSRAVGVDIMKYEQPKGTQSLEEFFTTMRNSFTPDEWGRIRLGATGNAVGAPHLRRFYKYWSLKEAYLKAIGIGIGFGLQRASFTLDEESGIAMLDLDGARDTQFTFRLSQLDDEHCVSVAVEHHAADGDAAPRIAWRRLAGIEVKDEEGVVLVDSK.

Residues arginine 60, 99–104 (RTEMGK), and 118–121 (NLSH) each bind CoA. 2 residues coordinate Mg(2+): aspartate 139 and glutamate 196. 196 to 200 (EAYLK) serves as a coordination point for CoA.

It belongs to the P-Pant transferase superfamily. AcpS family. In terms of assembly, monomer.

The protein resides in the cytoplasm. The protein localises to the cytosol. It carries out the reaction apo-[ACP] + CoA = holo-[ACP] + adenosine 3',5'-bisphosphate + H(+). It participates in lipid metabolism; fatty acid biosynthesis. Its function is as follows. Phosphopantetheinyl transferase that is essential for attaching phosphopantetheine to ACP domains of the polyunsaturated fatty acid (PUFA) synthase converting the inactive apo-synthase to the active holo-synthase. This chain is Phosphopantetheinyl transferase, found in Thraustochytrium sp. (strain ATCC 26185 / S-3).